The chain runs to 522 residues: MVRSGKNGDLHLKQIAYYKRTGEYHPTTLPSERSGIRRAAKKFVFKDKKLFYVGEDRKQNRLVIVSEEEKKKVLRECHENDSGAHHGISRTLTLVESNYYWTSVTNDVKQWVYACQHCQVAKNTVIVAPKQHLLKVENPWSLVTVDLMGPFHTSNRSHVYAIIMTDLFTKWVVILPLCDVSASEVSKAIINIFFLYGPPQKIIMDQRDEFIQQINIELYRLFGIKQIVISHTSGTVSPMETTPSTIKAFLSKHCADHPNNWDDHLSAVSFAFNVTHLEPTKNTPYFQMFSRNPYMPETSDSLHDVDGDNTSMFAKILDAIKEADEIMENKTTSLGQMENNNLDELNKSKIIVKKKPKQLNPFHLKVGHEVLRQRKNWWKDGRFQSEWVGPCVIDYITESGCAVLRDNTGVRLKRPIKMSHLKPYIRESSEQESLYLLQGSVVADHDYIGLPEIPVGAYQANILVEDATIGIVDNELLTSSKDRELLEYRNTKISPLIDDHSTLEKQTFSLLDSSNQVLEYLS.

The Integrase catalytic domain occupies 135–292 (KVENPWSLVT…TPYFQMFSRN (158 aa)).

The chain is Gypsy retrotransposon integrase-like protein 1 (GIN1) from Macaca fascicularis (Crab-eating macaque).